A 332-amino-acid polypeptide reads, in one-letter code: Ferredoxin--NADP reductase (332 aa).

The FAD site is built by aspartate 33, glutamine 41, tyrosine 46, alanine 86, methionine 121, aspartate 282, and serine 325.

This sequence belongs to the ferredoxin--NADP reductase type 2 family. Homodimer. FAD is required as a cofactor.

It carries out the reaction 2 reduced [2Fe-2S]-[ferredoxin] + NADP(+) + H(+) = 2 oxidized [2Fe-2S]-[ferredoxin] + NADPH. The polypeptide is Ferredoxin--NADP reductase (Sulfurisphaera tokodaii (strain DSM 16993 / JCM 10545 / NBRC 100140 / 7) (Sulfolobus tokodaii)).